Here is a 357-residue protein sequence, read N- to C-terminus: NADH-quinone oxidoreductase subunit H (357 aa).

8 helical membrane-spanning segments follow: residues 18–38 (VAWM…PIIL), 92–112 (VLFV…WAVV), 127–147 (LLYI…AGWA), 165–185 (VSYE…SGSL), 206–226 (FLSW…ISAV), 268–288 (ILLS…PIDI), 294–314 (IPGW…FVWF), and 329–349 (LGWK…AIWM).

The protein belongs to the complex I subunit 1 family. As to quaternary structure, NDH-1 is composed of 14 different subunits. Subunits NuoA, H, J, K, L, M, N constitute the membrane sector of the complex.

It is found in the cell inner membrane. It catalyses the reaction a quinone + NADH + 5 H(+)(in) = a quinol + NAD(+) + 4 H(+)(out). Its function is as follows. NDH-1 shuttles electrons from NADH, via FMN and iron-sulfur (Fe-S) centers, to quinones in the respiratory chain. The immediate electron acceptor for the enzyme in this species is believed to be ubiquinone. Couples the redox reaction to proton translocation (for every two electrons transferred, four hydrogen ions are translocated across the cytoplasmic membrane), and thus conserves the redox energy in a proton gradient. This subunit may bind ubiquinone. This Bordetella bronchiseptica (strain ATCC BAA-588 / NCTC 13252 / RB50) (Alcaligenes bronchisepticus) protein is NADH-quinone oxidoreductase subunit H.